Consider the following 729-residue polypeptide: Transketolase (729 aa).

Residue H97 participates in substrate binding. Residues H138 and 186–188 (GPL) contribute to the thiamine diphosphate site. D227 lines the Mg(2+) pocket. The thiamine diphosphate site is built by G228 and N257. The Mg(2+) site is built by N257 and I259. Positions 332, 423, and 450 each coordinate substrate. H332 lines the thiamine diphosphate pocket. Residue E477 is the Proton donor of the active site. Residue F503 participates in thiamine diphosphate binding. Residues H527, D535, and R586 each coordinate substrate.

This sequence belongs to the transketolase family. Homodimer. Requires Mg(2+) as cofactor. Ca(2+) serves as cofactor. It depends on Mn(2+) as a cofactor. The cofactor is Co(2+). Thiamine diphosphate is required as a cofactor.

The catalysed reaction is D-sedoheptulose 7-phosphate + D-glyceraldehyde 3-phosphate = aldehydo-D-ribose 5-phosphate + D-xylulose 5-phosphate. Its function is as follows. Catalyzes the transfer of a two-carbon ketol group from a ketose donor to an aldose acceptor, via a covalent intermediate with the cofactor thiamine pyrophosphate. This chain is Transketolase, found in Streptococcus pyogenes serotype M6 (strain ATCC BAA-946 / MGAS10394).